The primary structure comprises 254 residues: Small ribosomal subunit protein uS3 (254 aa).

The KH type-2 domain maps to 39–109 (IRNYISARLK…EVKIDVIEVI (71 aa)). The tract at residues 220–254 (EEMKKMQERRNDSRGRGRGDGRGAKRRRRPAAKKA) is disordered. Over residues 221–242 (EMKKMQERRNDSRGRGRGDGRG) the composition is skewed to basic and acidic residues. The span at 243–254 (AKRRRRPAAKKA) shows a compositional bias: basic residues.

The protein belongs to the universal ribosomal protein uS3 family. Part of the 30S ribosomal subunit. Forms a tight complex with proteins S10 and S14.

In terms of biological role, binds the lower part of the 30S subunit head. Binds mRNA in the 70S ribosome, positioning it for translation. The sequence is that of Small ribosomal subunit protein uS3 from Chlorobaculum parvum (strain DSM 263 / NCIMB 8327) (Chlorobium vibrioforme subsp. thiosulfatophilum).